Reading from the N-terminus, the 654-residue chain is Fatty acid photodecarboxylase, chloroplastic (654 aa).

Residues 1 to 62 constitute a chloroplast transit peptide; the sequence is MASITSRASA…RRGGALSARA (62 aa). FAD contacts are provided by residues 93–94, Glu-114, Leu-162, Ser-166, 170–173, and Val-298; these read TA and NATL. 4 residues coordinate hexadecanoate: Cys-432, Arg-451, Tyr-466, and Gln-486. FAD is bound at residue Gly-622.

It belongs to the GMC oxidoreductase family. The cofactor is FAD.

It is found in the plastid. The protein resides in the chloroplast. The catalysed reaction is a long-chain fatty acid + hnu + H(+) = a long-chain alkane + CO2. The enzyme catalyses hnu + hexadecanoate + H(+) = pentadecane + CO2. It catalyses the reaction hnu + octadecanoate + H(+) = heptadecane + CO2. It carries out the reaction heptadecanoate + hnu + H(+) = hexadecane + CO2. The catalysed reaction is hnu + tetradecanoate + H(+) = tridecane + CO2. The enzyme catalyses octanoate + hnu + H(+) = heptane + CO2. Its activity is regulated as follows. Activated by blue light and repressed by red light. In terms of biological role, catalyzes the decarboxylation of free fatty acids to n-alkanes or n-alkenes in response to blue light. Substrate preference is toward fatty acids with C16 or C17 chains. Converts n-octanoic acid (C8 chain) more efficiently than palmitate (n-hexadecanoic acid, C16 chain) into n-heptane (C7 chain) and n-pentadecane (C15 chain), respectively, partly due to an autocatalytic effect of its n-heptane product. Saturated fatty acids are converted to alkanes, not alkenes. The decarboxylation is initiated through electron abstraction from the fatty acid by the photo-excited FAD. In Chlorella variabilis (Green alga), this protein is Fatty acid photodecarboxylase, chloroplastic.